The primary structure comprises 473 residues: Glutamate--tRNA ligase 2 (473 aa).

Positions 11–21 (PSPTGYLHIGG) match the 'HIGH' region motif. Over residues 113-133 (KARAEGRPPRYDGRWRDRDPS) the composition is skewed to basic and acidic residues. The tract at residues 113–136 (KARAEGRPPRYDGRWRDRDPSEAP) is disordered. The 'KMSKS' region motif lies at 240 to 244 (KLSKR). An ATP-binding site is contributed by lysine 243.

It belongs to the class-I aminoacyl-tRNA synthetase family. Glutamate--tRNA ligase type 1 subfamily. In terms of assembly, monomer.

It localises to the cytoplasm. It carries out the reaction tRNA(Glu) + L-glutamate + ATP = L-glutamyl-tRNA(Glu) + AMP + diphosphate. Its function is as follows. Catalyzes the attachment of glutamate to tRNA(Glu) in a two-step reaction: glutamate is first activated by ATP to form Glu-AMP and then transferred to the acceptor end of tRNA(Glu). This is Glutamate--tRNA ligase 2 from Brucella abortus (strain S19).